A 182-amino-acid polypeptide reads, in one-letter code: Transcription termination/antitermination protein NusG (182 aa).

One can recognise a KOW domain in the interval 131 to 163; that stretch reads VGEQVRIQSGPFANQIGEVQEIEADKFKLTVLV.

The protein belongs to the NusG family.

Its function is as follows. Participates in transcription elongation, termination and antitermination. The protein is Transcription termination/antitermination protein NusG of Staphylococcus epidermidis (strain ATCC 35984 / DSM 28319 / BCRC 17069 / CCUG 31568 / BM 3577 / RP62A).